A 168-amino-acid chain; its full sequence is Microtubule-associated protein Jupiter (168 aa).

The segment covering 1 to 14 (MISNFDCTDNQASS) has biased composition (polar residues). Positions 1–33 (MISNFDCTDNQASSKVLRPPGGGSSDIFGSEMP) are disordered. Phosphoserine is present on Ser24. Phosphothreonine is present on Thr35. The segment covering 76–87 (RGQKTVDSHSRL) has biased composition (basic and acidic residues). Disordered regions lie at residues 76 to 106 (RGQK…KSSI) and 124 to 168 (NGHY…GAGK). Phosphothreonine is present on residues Thr92 and Thr96. Phosphoserine is present on residues Ser105, Ser133, and Ser144. Residues 131-144 (SGSVSSASSSVSSS) are compositionally biased toward low complexity. Polar residues predominate over residues 145 to 155 (TENLKMNSGSR).

It belongs to the MAP Jupiter family.

It localises to the nucleus. It is found in the cytoplasm. The protein resides in the cytoskeleton. Its subcellular location is the spindle. Functionally, binds to all microtubule populations. The polypeptide is Microtubule-associated protein Jupiter (Drosophila simulans (Fruit fly)).